The following is a 374-amino-acid chain: Speckle-type POZ protein (374 aa).

The region spanning 31–161 (KFSYMWTINN…DDKLTLFCEV (131 aa)) is the MATH domain. The segment at 71 to 191 (VNPKGLDEES…PECRLADELG (121 aa)) is required for nuclear localization. Residues 123–133 (YRFVQGKDWGF) are important for binding substrate proteins. In terms of domain architecture, BTB spans 173-297 (QNTMNMVKVP…MCEDALCSNL (125 aa)). 2 important for homodimerization regions span residues 186–217 (LADE…HKAI) and 297–355 (LSVE…AYRS).

The protein belongs to the Tdpoz family. In terms of assembly, interacts with GLI2 and GLI3. Homodimer and homooligomer. Heterodimer with SPOPL. Each dimer interacts with two CUL3 molecules. Part of cullin-RING-based BCR (BTB-CUL3-RBX1) E3 ubiquitin-protein ligase complexes that contain CUL3 and homodimeric SPOP, or the heterodimer formed by SPOP and SPOPL, plus a target protein, such as MACROH2A1, PDX1/IPF1, BMI1, BRMS1 and DAXX. Interacts with IRF1; this interaction mediates IRF1 proteasomal degradation. Interacts with HNF1A.

Its subcellular location is the nucleus. The protein resides in the nucleus speckle. It functions in the pathway protein modification; protein ubiquitination. Component of a cullin-RING-based BCR (BTB-CUL3-RBX1) E3 ubiquitin-protein ligase complex that mediates the ubiquitination of target proteins, leading most often to their proteasomal degradation. In complex with CUL3, involved in ubiquitination and proteasomal degradation of BRMS1, DAXX, PDX1/IPF1, GLI2 and GLI3. In complex with CUL3, involved in ubiquitination of MACROH2A1 and BMI1; this does not lead to their proteasomal degradation. Inhibits transcriptional activation of PDX1/IPF1 targets, such as insulin, by promoting PDX1/IPF1 degradation. The cullin-RING-based BCR (BTB-CUL3-RBX1) E3 ubiquitin-protein ligase complex containing homodimeric SPOP has higher ubiquitin ligase activity than the complex that contains the heterodimer formed by SPOP and SPOPL. Involved in the regulation of bromodomain and extra-terminal motif (BET) proteins BRD2, BRD3, BRD4 stability.Plays an essential role for proper translation, but not for their degradation, of critical DNA replication licensing factors CDT1 and CDC6, thereby participating in DNA synthesis and cell proliferation. Regulates interferon regulatory factor 1/IRF1 proteasomal turnover by targeting S/T-rich degrons in IRF1. Involved in ubiquitination of BRDT and promotes its degradation, thereby regulates histone removal in early condensing spermatids prior to histone-to-protamine exchange. This Bos taurus (Bovine) protein is Speckle-type POZ protein (SPOP).